Consider the following 329-residue polypeptide: MTSNSFPVFDGVSNKYDNNTFYGRYQNFRDITDPSTLFATEKDLSQSKTLLDNFKKGLVDPVKHSDELWKAKKILDSTIHPDTGKPIFLPFRVSAFLPINVIICAGLILPNASIGTTIFWQWINQSYNIALNHANRNASNTMSNKQILEAYASAVGISCSLAVGLGWGVNKLNIQNKTISSALRMMVPFTAVTSAGIANVLIMRGNEMVNGIDIKDKDGVIHGKSKEAGKSAVYKVAFSRAATSFPALLLPPIVMGLFERTSFVKKYPKVRMPLNLAVIAAIFNTSLPAAIALFPQESTISADSLEPQFRNIKDKNGNIIKEFIYNKGL.

The next 5 helical transmembrane spans lie at 95–115, 147–167, 183–203, 238–258, and 274–294; these read AFLP…ASIG, ILEA…GLGW, LRMM…VLIM, FSRA…MGLF, and LNLA…IALF.

This sequence belongs to the sideroflexin family.

The protein resides in the mitochondrion membrane. Functionally, mitochondrial amino-acid transporter that mediates transport of serine into mitochondria. This Dictyostelium discoideum (Social amoeba) protein is Sideroflexin.